The primary structure comprises 246 residues: Histone H1 (246 aa).

Disordered regions lie at residues 1-51 (MATD…PTHL) and 105-246 (GGKL…KAKK). Over residues 9–34 (PAPLVDAAPEAPADAPAAPAADANAA) the composition is skewed to low complexity. Residues 35-47 (KAKKATAPKKRAS) are compositionally biased toward basic residues. Residues 49 to 119 (THLPYAEMVS…KVKNSYKLSS (71 aa)) enclose the H15 domain. 2 stretches are compositionally biased toward basic residues: residues 129 to 189 (AAPK…KAKP) and 198 to 208 (PLAKKAGRAKA). Low complexity predominate over residues 224–235 (KKAAPSKKAATP).

Belongs to the histone H1/H5 family.

It is found in the nucleus. The protein resides in the chromosome. Its function is as follows. Histones H1 are necessary for the condensation of nucleosome chains into higher-order structures. In Zea mays (Maize), this protein is Histone H1.